We begin with the raw amino-acid sequence, 450 residues long: DNA primase DnaG (450 aa).

Residues 199–273 (DSIIVVEGRA…DVDYVARAPE (75 aa)) form the Toprim domain. Residues Glu-205, Asp-247, and Asp-249 each coordinate Mg(2+). A compositionally biased stretch (basic and acidic residues) spans 320–348 (APSKEVKPAPKHEPKPQPVEQKPREEKII). Positions 320–350 (APSKEVKPAPKHEPKPQPVEQKPREEKIIRP) are disordered.

The protein belongs to the archaeal DnaG primase family. In terms of assembly, forms a ternary complex with MCM helicase and DNA. Component of the archaeal exosome complex. The cofactor is Mg(2+).

The catalysed reaction is ssDNA + n NTP = ssDNA/pppN(pN)n-1 hybrid + (n-1) diphosphate.. Its function is as follows. RNA polymerase that catalyzes the synthesis of short RNA molecules used as primers for DNA polymerase during DNA replication. Also part of the exosome, which is a complex involved in RNA degradation. Acts as a poly(A)-binding protein that enhances the interaction between heteromeric, adenine-rich transcripts and the exosome. This chain is DNA primase DnaG, found in Thermococcus gammatolerans (strain DSM 15229 / JCM 11827 / EJ3).